The chain runs to 352 residues: MAIISSNIGDNDFSFRKKELRLVDSKNIPEEKRNNNLNLARPLNLKEFIGQEQLKSSLRVAIDASIIRKEPLEHTLLYGQPGLGKTTLAFLIAHELNTKCRIATAPAIERPRDIVGLLLGLKEGEVLFIDEIHRLNRLTEELLYSAMEDFRLDLTMGANRGARCRTINLPRFTLIGATTKLASISAPLRDRFGISQKIEFYTCDELKQIIVNFSRLINLNLEDEASYDLAKISRGTPRIALRLLRRVRDYAQVVMKTNTISVNLIKKALNSYQIDEKGLDSLDRHYLSFLNQNNNIPIGLDSIASGLGDDSSMLEFVVEPYLIKIGFLTRTPRGRLLTALGKKYIDSKDDNF.

The tract at residues 13-201 (FSFRKKELRL…FGISQKIEFY (189 aa)) is large ATPase domain (RuvB-L). Residues Arg41, Gly82, Lys85, Thr86, Thr87, 148–150 (EDF), Arg191, Tyr201, and Arg238 contribute to the ATP site. Thr86 serves as a coordination point for Mg(2+). The segment at 202–273 (TCDELKQIIV…LIKKALNSYQ (72 aa)) is small ATPAse domain (RuvB-S). Positions 276 to 352 (EKGLDSLDRH…KYIDSKDDNF (77 aa)) are head domain (RuvB-H). Positions 330 and 335 each coordinate DNA.

Belongs to the RuvB family. In terms of assembly, homohexamer. Forms an RuvA(8)-RuvB(12)-Holliday junction (HJ) complex. HJ DNA is sandwiched between 2 RuvA tetramers; dsDNA enters through RuvA and exits via RuvB. An RuvB hexamer assembles on each DNA strand where it exits the tetramer. Each RuvB hexamer is contacted by two RuvA subunits (via domain III) on 2 adjacent RuvB subunits; this complex drives branch migration. In the full resolvosome a probable DNA-RuvA(4)-RuvB(12)-RuvC(2) complex forms which resolves the HJ.

It localises to the cytoplasm. The catalysed reaction is ATP + H2O = ADP + phosphate + H(+). Functionally, the RuvA-RuvB-RuvC complex processes Holliday junction (HJ) DNA during genetic recombination and DNA repair, while the RuvA-RuvB complex plays an important role in the rescue of blocked DNA replication forks via replication fork reversal (RFR). RuvA specifically binds to HJ cruciform DNA, conferring on it an open structure. The RuvB hexamer acts as an ATP-dependent pump, pulling dsDNA into and through the RuvAB complex. RuvB forms 2 homohexamers on either side of HJ DNA bound by 1 or 2 RuvA tetramers; 4 subunits per hexamer contact DNA at a time. Coordinated motions by a converter formed by DNA-disengaged RuvB subunits stimulates ATP hydrolysis and nucleotide exchange. Immobilization of the converter enables RuvB to convert the ATP-contained energy into a lever motion, pulling 2 nucleotides of DNA out of the RuvA tetramer per ATP hydrolyzed, thus driving DNA branch migration. The RuvB motors rotate together with the DNA substrate, which together with the progressing nucleotide cycle form the mechanistic basis for DNA recombination by continuous HJ branch migration. Branch migration allows RuvC to scan DNA until it finds its consensus sequence, where it cleaves and resolves cruciform DNA. This is Holliday junction branch migration complex subunit RuvB from Prochlorococcus marinus (strain AS9601).